A 344-amino-acid polypeptide reads, in one-letter code: Methionine import ATP-binding protein MetN (344 aa).

Residues 2–241 (IELQGLSQRF…PQHEVTRAMI (240 aa)) form the ABC transporter domain. 38-45 (GRSGAGKS) contacts ATP.

The protein belongs to the ABC transporter superfamily. Methionine importer (TC 3.A.1.24) family. As to quaternary structure, the complex is composed of two ATP-binding proteins (MetN), two transmembrane proteins (MetI) and a solute-binding protein (MetQ).

It localises to the cell inner membrane. It carries out the reaction L-methionine(out) + ATP + H2O = L-methionine(in) + ADP + phosphate + H(+). The catalysed reaction is D-methionine(out) + ATP + H2O = D-methionine(in) + ADP + phosphate + H(+). Functionally, part of the ABC transporter complex MetNIQ involved in methionine import. Responsible for energy coupling to the transport system. This chain is Methionine import ATP-binding protein MetN, found in Cupriavidus pinatubonensis (strain JMP 134 / LMG 1197) (Cupriavidus necator (strain JMP 134)).